A 68-amino-acid chain; its full sequence is MKKSTVIVLSLAAFVLLSVMQFSAAEDIKMEVEEQRGYCAEKGIKCHNIHCCSGLTCKCKGSSCVCRK.

An N-terminal signal peptide occupies residues 1–25 (MKKSTVIVLSLAAFVLLSVMQFSAA). The propeptide occupies 26-36 (EDIKMEVEEQR). 4 disulfides stabilise this stretch: Cys39–Cys52, Cys46–Cys57, Cys51–Cys66, and Cys59–Cys64.

The protein belongs to the neurotoxin 33 family. As to expression, expressed by the venom gland.

It localises to the secreted. This is U4-agatoxin-Ao1a from Agelena orientalis (Funnel-web spider).